A 1012-amino-acid chain; its full sequence is Multiple C2 domain and transmembrane region protein 10 (1012 aa).

Positions 1–115 (MTEAKTGTGN…REGESVVQLY (115 aa)) constitute a C2 1 domain. The tract at residues 141-203 (ENGENVRRVN…SQQNGQGQRM (63 aa)) is disordered. Residues 148–160 (RVNRSGGSKKSKK) show a composition bias toward basic residues. Composition is skewed to low complexity over residues 161 to 180 (VQNV…QQQQ) and 188 to 202 (RGNQ…QGQR). 3 consecutive C2 domains span residues 262-376 (SSHK…PQWY), 411-551 (KAGN…SRWF), and 585-710 (YNSD…THSY). Residues Glu-296, Glu-344, Asn-346, and Glu-349 each coordinate Ca(2+). Helical transmembrane passes span 810–830 (FFRL…VEVM), 841–861 (VFVL…PCLL), and 952–972 (ATFL…TVPV).

This sequence belongs to the MCTP family. Ca(2+) serves as cofactor. Highly expressed in roots meristems, shoot apical meristems (SAMs) and in incipient leaf primordia. Observed in flowers.

It localises to the endoplasmic reticulum membrane. In terms of biological role, may function as a signaling molecule by regulating the trafficking of other regulators. The chain is Multiple C2 domain and transmembrane region protein 10 from Arabidopsis thaliana (Mouse-ear cress).